The sequence spans 423 residues: Serine/threonine-protein kinase ppk25 (423 aa).

Phosphoserine is present on residues S36 and S38. The region spanning 53 to 305 (WIIKKTIGAG…LEQAAKFPWL (253 aa)) is the Protein kinase domain. ATP contacts are provided by residues 59-67 (IGAGSMGKV) and K82. D175 serves as the catalytic Proton acceptor.

Belongs to the protein kinase superfamily. Ser/Thr protein kinase family.

Its subcellular location is the cytoplasm. It carries out the reaction L-seryl-[protein] + ATP = O-phospho-L-seryl-[protein] + ADP + H(+). The catalysed reaction is L-threonyl-[protein] + ATP = O-phospho-L-threonyl-[protein] + ADP + H(+). In Schizosaccharomyces pombe (strain 972 / ATCC 24843) (Fission yeast), this protein is Serine/threonine-protein kinase ppk25 (ppk25).